Here is a 122-residue protein sequence, read N- to C-terminus: Large ribosomal subunit protein uL14c (122 aa).

This sequence belongs to the universal ribosomal protein uL14 family. Part of the 50S ribosomal subunit.

It localises to the plastid. It is found in the chloroplast. Binds to 23S rRNA. This is Large ribosomal subunit protein uL14c from Adiantum capillus-veneris (Maidenhair fern).